A 471-amino-acid polypeptide reads, in one-letter code: Putative multidrug resistance protein MdtD (471 aa).

Topologically, residues 1–11 (MTDLPDSTRWQ) are periplasmic. A helical transmembrane segment spans residues 12-32 (LWIVAFGFFMQSLDTTIVNTA). Residues 33 to 48 (LPSMAQSLGESPLHMH) lie on the Cytoplasmic side of the membrane. The helical transmembrane segment at 49 to 69 (MVIVSYVLTVAVMLPASGWLA) threads the bilayer. Topologically, residues 70–76 (DKVGVRN) are periplasmic. Residues 77–97 (IFFTAIVLFTLGSLFCALSGT) form a helical membrane-spanning segment. Topologically, residues 98 to 101 (LNEL) are cytoplasmic. The helical transmembrane segment at 102–124 (LLARALQGVGGAMMVPVGRLTVM) threads the bilayer. The Periplasmic portion of the chain corresponds to 125–137 (KIVPREQYMAAMT). Residues 138–158 (FVTLPGQVGPLLGPALGGLLV) form a helical membrane-spanning segment. Residues 159–164 (EYASWH) lie on the Cytoplasmic side of the membrane. Residues 165–185 (WIFLINIPVGIIGAIATLMLM) traverse the membrane as a helical segment. Over 186 to 196 (PNYTMQTRRFD) the chain is Periplasmic. A helical transmembrane segment spans residues 197 to 217 (LSGFLLLAVGMAVLTLALDGS). Over 218–224 (KGTGLSP) the chain is Cytoplasmic. A helical transmembrane segment spans residues 225-245 (LTIDGLVAVGVVALVLYLLHA). Topologically, residues 246–262 (RNNNRALFSLKLFRTRT) are periplasmic. The helical transmembrane segment at 263 to 283 (FSLGLAGSFAGRIGSGMLPFM) threads the bilayer. Over 284–285 (TP) the chain is Cytoplasmic. Residues 286–306 (VFLQIGLGFSPFHAGLMMIPM) traverse the membrane as a helical segment. Residues 307–341 (VLGSMGMKRIVVQVVNRFGYRRVLVATTLGLSLVT) are Periplasmic-facing. The helical transmembrane segment at 342–362 (LLFMTTALLGWYYVLPFVLFL) threads the bilayer. At 363 to 395 (QGMVNSTRFSSMNTLTLKDLPDNLASSGNSLLS) the chain is on the cytoplasmic side. Residues 396-416 (MIMQLSMSIGVTIAGLLLGLF) form a helical membrane-spanning segment. Residues 417–430 (GSQHVSVDSGTTQT) are Periplasmic-facing. A helical transmembrane segment spans residues 431-451 (VFMYTWLSMAFIIALPAFIFA). Residues 452-471 (RVPNDTHQNVAISRRKRSAQ) are Cytoplasmic-facing.

This sequence belongs to the major facilitator superfamily. TCR/Tet family.

It is found in the cell inner membrane. This chain is Putative multidrug resistance protein MdtD, found in Escherichia coli O8 (strain IAI1).